The following is a 92-amino-acid chain: MARSIKKGPFIEKSLYQKVLSSFGSEKRVVIKTYSRSSTIIPEMVSLTISVYNGKTFIPIYITEDLVGHKLGEFSPTRIFRGHAKSDKKGRK.

The protein belongs to the universal ribosomal protein uS19 family.

Its function is as follows. Protein S19 forms a complex with S13 that binds strongly to the 16S ribosomal RNA. The sequence is that of Small ribosomal subunit protein uS19 from Borreliella afzelii (strain PKo) (Borrelia afzelii).